We begin with the raw amino-acid sequence, 184 residues long: UPF0301 protein ABSDF3201 (184 aa).

It belongs to the UPF0301 (AlgH) family.

In Acinetobacter baumannii (strain SDF), this protein is UPF0301 protein ABSDF3201.